A 153-amino-acid polypeptide reads, in one-letter code: Ribosomal RNA large subunit methyltransferase H (153 aa).

Residues Leu70, Gly102, and 121-126 each bind S-adenosyl-L-methionine; that span reads FSKMTF.

This sequence belongs to the RNA methyltransferase RlmH family. As to quaternary structure, homodimer.

Its subcellular location is the cytoplasm. It catalyses the reaction pseudouridine(1915) in 23S rRNA + S-adenosyl-L-methionine = N(3)-methylpseudouridine(1915) in 23S rRNA + S-adenosyl-L-homocysteine + H(+). Its function is as follows. Specifically methylates the pseudouridine at position 1915 (m3Psi1915) in 23S rRNA. The sequence is that of Ribosomal RNA large subunit methyltransferase H from Desulfotalea psychrophila (strain LSv54 / DSM 12343).